Here is an 85-residue protein sequence, read N- to C-terminus: Serine protease inhibitor Cvsi-2 (85 aa).

An N-terminal signal peptide occupies residues 1–18; that stretch reads MKVAVVVALLCFVCYTAA.

Contains 6 disulfide bonds. As to expression, detected in hemolymph (at protein level). Within the digestive gland expression is limited to the basophil cells of the digestive diverticula.

Its subcellular location is the secreted. In terms of biological role, slow-binding inhibitor of serine proteases. The inhibitor rapidly binds to the protease forming a weak enzyme-inhibitor complex, and this is followed by a slow isomerization forming a tight-binding enzyme-inhibitor complex. Active against subtilisin A with a dissociation constant of 0.18 nM. Active against perkinsin. Not active against thermolysin, papain or pepsin. This is Serine protease inhibitor Cvsi-2 from Crassostrea virginica (Eastern oyster).